Reading from the N-terminus, the 611-residue chain is Leukotriene A-4 hydrolase (611 aa).

N6-acetyllysine is present on Lys73. A peptide-binding positions include 135-137 (QCQ) and 267-272 (PYGGME). A Zn(2+)-binding site is contributed by His296. The active-site Proton acceptor is Glu297. The Zn(2+) site is built by His300 and Glu319. Lys337 carries the N6-acetyllysine modification. Residue Tyr384 is the Proton donor of the active site. Ser416 carries the phosphoserine modification. 564–566 (RMK) is an a peptide binding site. Lys573 carries the N6-acetyllysine modification.

This sequence belongs to the peptidase M1 family. It depends on Zn(2+) as a cofactor. In terms of processing, phosphorylation at Ser-416 inhibits enzymatic activity.

It is found in the cytoplasm. It carries out the reaction leukotriene A4 + H2O = leukotriene B4. The protein operates within lipid metabolism; leukotriene B4 biosynthesis. With respect to regulation, inhibited by bestatin. Subject to suicide inhibition by leukotriene A4. Epoxide hydrolase that catalyzes the final step in the biosynthesis of the pro-inflammatory mediator leukotriene B4. Also has aminopeptidase activity. The polypeptide is Leukotriene A-4 hydrolase (LTA4H) (Chinchilla lanigera (Long-tailed chinchilla)).